The following is a 310-amino-acid chain: Iron ABC transporter substrate-binding lipoprotein MtsA (310 aa).

A signal peptide spans 1–20 (MGKKMSLILGAFLSVFLLVA). Cys-21 carries N-palmitoyl cysteine lipidation. Cys-21 carries S-diacylglycerol cysteine lipidation. Fe(2+) contacts are provided by His-68, His-140, Glu-206, and Asp-281.

Belongs to the bacterial solute-binding protein 9 family. Lipoprotein receptor antigen (Lrai) subfamily.

The protein localises to the cell membrane. Its function is as follows. Part of the ATP-binding cassette (ABC) transport system MtsABC involved in iron import. Binds iron with high affinity and specificity and delivers it to the membrane permease for translocation into the cytoplasm. Has low affinity for Zn(2+) and Cu(2+). This chain is Iron ABC transporter substrate-binding lipoprotein MtsA (mtsA), found in Streptococcus pyogenes serotype M6 (strain ATCC BAA-946 / MGAS10394).